A 702-amino-acid polypeptide reads, in one-letter code: MAGIYLFVVAAALAALGYGALTIKTIMAADAGTARMQEISGAVQEGASAFLNRQYKTIAVVGAVVFVILTALLGISVGFGFLIGAVCSGIAGYVGMYISVRANVRVAAGAQQGLARGLELAFQSGAVTGMLVAGLALLSVAFYYILLVGIGATGRALIDPLVALGFGASLISIFARLGGGIFTKGADVGADLVGKVEAGIPEDDPRNPAVIADNVGDNVGDCAGMAADLFETYAVTVVATMVLASIFFAGVPAMTSMMAYPLAIGGVCILASILGTKFVKLGPKNNIMGALYRGFLVSAGASFVGIILATAIVPGFGDIQGANGVLYSGFDLFLCAVIGLLVTGLLIWVTEYYTGTNFRPVRSVAKASTTGHGTNVIQGLAISMEATALPALIICAAIITTYQLSGLFGIAITVTSMLALAGMVVALDAYGPVTDNAGGIAEMANLPEDVRKTTDALDAVGNTTKAVTKGYAIGSAGLGALVLFAAYTEDLAFFKANVDAYPAFAGVDVNFSLSSPYVVVGLFIGGLLPYLFGSMGMTAVGRAAGSVVEEVRRQFREIPGIMEGTAKPEYGRCVDMLTKAAIKEMIIPSLLPVLAPIVLYFVILGIADKSAAFSALGAMLLGVIVTGLFVAISMTAGGGAWDNAKKYIEDGHYGGKGSEAHKAAVTGDTVGDPYKDTAGPAVNPMIKITNIVALLLLAVLAH.

4 helical membrane passes run 3–23 (GIYL…ALTI), 63–83 (AVVF…GFLI), 130–150 (MLVA…LVGI), and 162–182 (VALG…GGIF). K184 provides a ligand contact to substrate. Mg(2+) contacts are provided by D187, D191, N214, and D217. Helical transmembrane passes span 234-254 (AVTV…VPAM), 255-275 (TSMM…SILG), 294-314 (GFLV…AIVP), 329-349 (GFDL…LIWV), 379-399 (GLAI…AAII), and 407-427 (LFGI…VVAL). Mg(2+) is bound at residue D435. The next 4 membrane-spanning stretches (helical) occupy residues 466–486 (AVTK…LFAA), 517–537 (YVVV…SMGM), 586–606 (IIPS…ILGI), and 612–632 (AFSA…FVAI). D642, D668, and D672 together coordinate Ca(2+). K675 contributes to the substrate binding site.

Belongs to the H(+)-translocating pyrophosphatase (TC 3.A.10) family. K(+)-insensitive subfamily. In terms of assembly, homodimer. It depends on Mg(2+) as a cofactor.

The protein resides in the cell inner membrane. The catalysed reaction is diphosphate + H2O + H(+)(in) = 2 phosphate + 2 H(+)(out). Its function is as follows. Proton pump that utilizes the energy of pyrophosphate hydrolysis as the driving force for proton movement across the membrane. Generates a proton motive force. This Rhodospirillum rubrum (strain ATCC 11170 / ATH 1.1.1 / DSM 467 / LMG 4362 / NCIMB 8255 / S1) protein is K(+)-insensitive pyrophosphate-energized proton pump.